An 807-amino-acid polypeptide reads, in one-letter code: Poly-beta-1,6-N-acetyl-D-glucosamine export protein (807 aa).

The N-terminal stretch at 1 to 26 (MYSSSRKRCPKTKWALKLLTAAFLAA) is a signal peptide. TPR repeat units lie at residues 98–131 (ARGY…EPQN), 165–198 (KANL…NAST), and 279–311 (RIQV…GQII).

The protein resides in the cell outer membrane. In terms of biological role, exports the biofilm adhesin polysaccharide poly-beta-1,6-N-acetyl-D-glucosamine (PGA) across the outer membrane. The PGA transported seems to be partially N-deacetylated since N-deacetylation of PGA by PgaB is needed for PGA export through the PgaA porin. This Escherichia coli O157:H7 protein is Poly-beta-1,6-N-acetyl-D-glucosamine export protein (pgaA).